A 532-amino-acid polypeptide reads, in one-letter code: Maternal protein exuperantia (532 aa).

Disordered regions lie at residues 206 to 251 (CSAS…NAVQ) and 403 to 491 (TVKP…NGLK). Low complexity-rich tracts occupy residues 220-231 (GSSMVSDSVSIS) and 404-417 (VKPVVKGNSNNNNN). Polar residues predominate over residues 454–467 (SVSSLPDSTTKTPS). At serine 467 the chain carries Phosphoserine.

Component of the osk RNP complex, which is composed of at least exuperantia (exu), ypsilon schachtel (yps), aret (bruno), cup, and the mRNA of osk. In the sponge body, forms a ribonucleoprotein complex (RNP) containing at least me31B, exu, yps and the mRNA of osk; interactions with exu and yps are RNA dependent.

It is found in the cytoplasm. The protein localises to the cytoplasmic ribonucleoprotein granule. In terms of biological role, ensures the proper localization of the mRNA of the bicoid gene to the anterior regions of the oocyte thus playing a fundamental role in the establishment of the polarity of the oocyte. May bind the bcd mRNA. This chain is Maternal protein exuperantia (exu), found in Drosophila melanogaster (Fruit fly).